We begin with the raw amino-acid sequence, 718 residues long: Phenylalanine--tRNA ligase beta subunit (718 aa).

The region spanning 39–153 (LNEISGIKFG…IFDLESNPLK (115 aa)) is the tRNA-binding domain. Residues 386–460 (SKKTFLDLNY…RFYGLEKLKD (75 aa)) enclose the B5 domain. Positions 438, 444, and 448 each coordinate Mg(2+).

It belongs to the phenylalanyl-tRNA synthetase beta subunit family. Type 1 subfamily. In terms of assembly, tetramer of two alpha and two beta subunits. Mg(2+) serves as cofactor.

The protein resides in the cytoplasm. It carries out the reaction tRNA(Phe) + L-phenylalanine + ATP = L-phenylalanyl-tRNA(Phe) + AMP + diphosphate + H(+). In Mesomycoplasma hyopneumoniae (strain J / ATCC 25934 / NCTC 10110) (Mycoplasma hyopneumoniae), this protein is Phenylalanine--tRNA ligase beta subunit.